Here is a 308-residue protein sequence, read N- to C-terminus: HTH-type transcriptional regulator YtlI (308 aa).

In terms of domain architecture, HTH lysR-type spans 1 to 57; that stretch reads MELRSIKTFHTIVKFGSFYKAAEILNYSQPTISMRMKQLEQDLGVLLFERGKSLQLT. Positions 18–37 form a DNA-binding region, H-T-H motif; that stretch reads FYKAAEILNYSQPTISMRMK.

Belongs to the LysR transcriptional regulatory family.

Functionally, positively regulates the expression of ytmI operon in response to the availability of sulfur sources. This is HTH-type transcriptional regulator YtlI (ytlI) from Bacillus subtilis (strain 168).